A 350-amino-acid polypeptide reads, in one-letter code: UPF0284 protein MJ1598 (350 aa).

This sequence belongs to the UPF0284 family.

The sequence is that of UPF0284 protein MJ1598 from Methanocaldococcus jannaschii (strain ATCC 43067 / DSM 2661 / JAL-1 / JCM 10045 / NBRC 100440) (Methanococcus jannaschii).